A 323-amino-acid polypeptide reads, in one-letter code: Ankyrin repeat and SOCS box protein 11 (323 aa).

ANK repeat units lie at residues Ala64 to Leu93, Asn97 to Gly126, His130 to Phe159, His162 to His191, Gln195 to His224, and Trp227 to Arg256. The SOCS box domain maps to Val274–Gln323.

The protein belongs to the ankyrin SOCS box (ASB) family. In terms of assembly, substrate-recognition component of the ECS(ASB11) complex, composed of ASB11, CUL5, ELOB, ELOC and RNF7/RBX2.

Its subcellular location is the endoplasmic reticulum. It participates in protein modification; protein ubiquitination. Its function is as follows. Substrate-recognition component of a cullin-5-RING E3 ubiquitin-protein ligase complex (ECS complex, also named CRL5 complex), which mediates the ubiquitination and subsequent proteasomal degradation of target proteins, such as BIK, DIRAS2 and RPN1. The ECS(ASB11) complex acts as a regulator of the endoplasmic reticulum unfolded protein response by mediating ubiquitination and degradation of BIK. In Pongo abelii (Sumatran orangutan), this protein is Ankyrin repeat and SOCS box protein 11 (ASB11).